We begin with the raw amino-acid sequence, 225 residues long: 7-cyano-7-deazaguanine synthase (225 aa).

10-20 (LSGGIDSATAA) contacts ATP. Zn(2+) contacts are provided by cysteine 191, cysteine 199, cysteine 202, and cysteine 205.

This sequence belongs to the QueC family. The cofactor is Zn(2+).

The catalysed reaction is 7-carboxy-7-deazaguanine + NH4(+) + ATP = 7-cyano-7-deazaguanine + ADP + phosphate + H2O + H(+). It functions in the pathway purine metabolism; 7-cyano-7-deazaguanine biosynthesis. Catalyzes the ATP-dependent conversion of 7-carboxy-7-deazaguanine (CDG) to 7-cyano-7-deazaguanine (preQ(0)). The protein is 7-cyano-7-deazaguanine synthase of Prochlorococcus marinus (strain NATL2A).